A 407-amino-acid polypeptide reads, in one-letter code: Arginine deiminase (407 aa).

The active-site Amidino-cysteine intermediate is the cysteine 397.

It belongs to the arginine deiminase family.

The protein resides in the cytoplasm. It catalyses the reaction L-arginine + H2O = L-citrulline + NH4(+). It participates in amino-acid degradation; L-arginine degradation via ADI pathway; carbamoyl phosphate from L-arginine: step 1/2. The sequence is that of Arginine deiminase from Escherichia coli O81 (strain ED1a).